Consider the following 197-residue polypeptide: Ribonuclease HII (197 aa).

Residues 9-197 (KLIAGVDEVG…APVKKALEQF (189 aa)) form the RNase H type-2 domain. A divalent metal cation contacts are provided by Asp15, Glu16, and Asp107.

This sequence belongs to the RNase HII family. Mn(2+) serves as cofactor. The cofactor is Mg(2+).

The protein localises to the cytoplasm. The catalysed reaction is Endonucleolytic cleavage to 5'-phosphomonoester.. Its function is as follows. Endonuclease that specifically degrades the RNA of RNA-DNA hybrids. This is Ribonuclease HII (rnhB) from Haemophilus influenzae (strain ATCC 51907 / DSM 11121 / KW20 / Rd).